Here is a 260-residue protein sequence, read N- to C-terminus: Electron transfer flavoprotein subunit beta (260 aa).

Belongs to the ETF beta-subunit/FixA family. Heterodimer of an alpha and a beta subunit. FAD serves as cofactor. AMP is required as a cofactor.

Its function is as follows. The electron transfer flavoprotein serves as a specific electron acceptor for other dehydrogenases. It transfers the electrons to the main respiratory chain via ETF-ubiquinone oxidoreductase (ETF dehydrogenase). The polypeptide is Electron transfer flavoprotein subunit beta (etfB) (Thermoanaerobacterium thermosaccharolyticum (strain ATCC 7956 / DSM 571 / NCIMB 9385 / NCA 3814 / NCTC 13789 / WDCM 00135 / 2032) (Clostridium thermosaccharolyticum)).